Reading from the N-terminus, the 199-residue chain is dITP/XTP pyrophosphatase (199 aa).

7–12 (SNNRGK) contacts substrate. Residue aspartate 68 is the Proton acceptor of the active site. Aspartate 68 is a binding site for Mg(2+). Residues alanine 69, 154 to 157 (FGFD), lysine 177, and 182 to 183 (HR) contribute to the substrate site.

This sequence belongs to the HAM1 NTPase family. Homodimer. Mg(2+) serves as cofactor.

The enzyme catalyses XTP + H2O = XMP + diphosphate + H(+). It catalyses the reaction dITP + H2O = dIMP + diphosphate + H(+). The catalysed reaction is ITP + H2O = IMP + diphosphate + H(+). In terms of biological role, pyrophosphatase that catalyzes the hydrolysis of nucleoside triphosphates to their monophosphate derivatives, with a high preference for the non-canonical purine nucleotides XTP (xanthosine triphosphate), dITP (deoxyinosine triphosphate) and ITP. Seems to function as a house-cleaning enzyme that removes non-canonical purine nucleotides from the nucleotide pool, thus preventing their incorporation into DNA/RNA and avoiding chromosomal lesions. The protein is dITP/XTP pyrophosphatase of Albidiferax ferrireducens (strain ATCC BAA-621 / DSM 15236 / T118) (Rhodoferax ferrireducens).